We begin with the raw amino-acid sequence, 374 residues long: Putative glutamate--cysteine ligase 2 (374 aa).

This sequence belongs to the glutamate--cysteine ligase type 2 family. YbdK subfamily.

It catalyses the reaction L-cysteine + L-glutamate + ATP = gamma-L-glutamyl-L-cysteine + ADP + phosphate + H(+). ATP-dependent carboxylate-amine ligase which exhibits weak glutamate--cysteine ligase activity. In Leptothrix cholodnii (strain ATCC 51168 / LMG 8142 / SP-6) (Leptothrix discophora (strain SP-6)), this protein is Putative glutamate--cysteine ligase 2.